A 153-amino-acid polypeptide reads, in one-letter code: MAKLKYKVEADPKNTARAMGRTLRISRKHAIELCRELSGMKLDAAVAYLNRVIALETPVPFKVHNKDLPHRKGKIGTHSGRFPQKASLEILNVLDNAKKNAEQKGLNTEKLRIKHISSNRGFTIKRYMPRAFGRASPKNQETIHIQVILEEFY.

Belongs to the universal ribosomal protein uL22 family. In terms of assembly, part of the 50S ribosomal subunit.

In terms of biological role, this protein binds specifically to 23S rRNA. It makes multiple contacts with different domains of the 23S rRNA in the assembled 50S subunit and ribosome. The globular domain of the protein is located near the polypeptide exit tunnel on the outside of the subunit, while an extended beta-hairpin is found that lines the wall of the exit tunnel in the center of the 70S ribosome. The chain is Large ribosomal subunit protein uL22 from Methanococcus maripaludis (strain DSM 14266 / JCM 13030 / NBRC 101832 / S2 / LL).